The chain runs to 322 residues: DNA primase small subunit PriS (322 aa).

Catalysis depends on residues Asp100, Asp102, and Asp228.

Belongs to the eukaryotic-type primase small subunit family. Heterodimer of a small subunit (PriS) and a large subunit (PriL). Requires Mg(2+) as cofactor. Mn(2+) serves as cofactor.

In terms of biological role, catalytic subunit of DNA primase, an RNA polymerase that catalyzes the synthesis of short RNA molecules used as primers for DNA polymerase during DNA replication. The small subunit contains the primase catalytic core and has DNA synthesis activity on its own. Binding to the large subunit stabilizes and modulates the activity, increasing the rate of DNA synthesis while decreasing the length of the DNA fragments, and conferring RNA synthesis capability. The DNA polymerase activity may enable DNA primase to also catalyze primer extension after primer synthesis. May also play a role in DNA repair. The chain is DNA primase small subunit PriS from Sulfolobus acidocaldarius (strain ATCC 33909 / DSM 639 / JCM 8929 / NBRC 15157 / NCIMB 11770).